The following is a 272-amino-acid chain: Phosphate import ATP-binding protein PstB 1 (272 aa).

In terms of domain architecture, ABC transporter spans Ile26 to Ile267. Gly58 to Ser65 contributes to the ATP binding site.

This sequence belongs to the ABC transporter superfamily. Phosphate importer (TC 3.A.1.7) family. The complex is composed of two ATP-binding proteins (PstB), two transmembrane proteins (PstC and PstA) and a solute-binding protein (PstS).

The protein localises to the cell inner membrane. It carries out the reaction phosphate(out) + ATP + H2O = ADP + 2 phosphate(in) + H(+). Its function is as follows. Part of the ABC transporter complex PstSACB involved in phosphate import. Responsible for energy coupling to the transport system. The chain is Phosphate import ATP-binding protein PstB 1 from Vibrio vulnificus (strain YJ016).